Here is a 434-residue protein sequence, read N- to C-terminus: A-adding tRNA nucleotidyltransferase (434 aa).

20-23 lines the ATP pocket; sequence GAVR. Positions 33 and 35 each coordinate Mg(2+). ATP is bound by residues 91 to 92, Asn96, 132 to 141, and Arg177; these read RD and DPLRAWRAAR. Residues 227 to 339 form the HD domain; it reads VFEHGVEALH…ELLPDLLSLM (113 aa).

Belongs to the tRNA nucleotidyltransferase/poly(A) polymerase family. The cofactor is Mg(2+).

It carries out the reaction a tRNA with a 3' CC end + ATP = a tRNA with a 3' CCA end + diphosphate. Functionally, tRNA nucleotidyltransferase involved in the synthesis of the tRNA CCA terminus. Adds the terminal adenosine residue to tRNA. The sequence is that of A-adding tRNA nucleotidyltransferase from Deinococcus radiodurans (strain ATCC 13939 / DSM 20539 / JCM 16871 / CCUG 27074 / LMG 4051 / NBRC 15346 / NCIMB 9279 / VKM B-1422 / R1).